Reading from the N-terminus, the 598-residue chain is Urease subunit alpha (598 aa).

Residues His-141, His-143, and Lys-223 each coordinate Ni(2+). Lys-223 bears the N6-carboxylysine mark. Residue His-225 participates in substrate binding. Positions 252 and 278 each coordinate Ni(2+). His-326 (proton donor) is an active-site residue. Asp-366 contributes to the Ni(2+) binding site.

This sequence belongs to the metallo-dependent hydrolases superfamily. Urease alpha subunit family. Heterotrimer of UreA (gamma), UreB (beta) and UreC (alpha) subunits. Three heterotrimers associate to form the active enzyme. It depends on Ni cation as a cofactor. Carboxylation allows a single lysine to coordinate two nickel ions.

The protein resides in the cytoplasm. The enzyme catalyses urea + 2 H2O + H(+) = hydrogencarbonate + 2 NH4(+). It participates in nitrogen metabolism; urea degradation; CO(2) and NH(3) from urea (urease route): step 1/1. The protein is Urease subunit alpha of Ureaplasma parvum serovar 3 (strain ATCC 27815 / 27 / NCTC 11736).